The chain runs to 201 residues: Recombination protein RecR (201 aa).

A C4-type zinc finger spans residues 60–75 (CSRCFHFTDAEECSIC). The region spanning 83-178 (GEICVVETTA…RVSRIAYGIP (96 aa)) is the Toprim domain.

The protein belongs to the RecR family.

Functionally, may play a role in DNA repair. It seems to be involved in an RecBC-independent recombinational process of DNA repair. It may act with RecF and RecO. In Syntrophobacter fumaroxidans (strain DSM 10017 / MPOB), this protein is Recombination protein RecR.